Reading from the N-terminus, the 447-residue chain is Protein cereblon (447 aa).

Acidic residues-rich tracts occupy residues 1 to 10 and 25 to 34; these read MADDEGEEDP and ESEEEDEMEL. Residues 1 to 47 are disordered; it reads MADDEGEEDPGINNMGNLLQVISSESEEEDEMELEDAKTADSESPNI. Positions 82 to 322 constitute a Lon N-terminal domain; it reads IPVLPHVQVM…CELDIMSKCT (241 aa). The CULT domain maps to 321–429; that stretch reads CTSLCCKHCP…LTRSALQPRI (109 aa). Positions 326 and 329 each coordinate Zn(2+). (S)-thalidomide is bound by residues W383 and W389. 2 residues coordinate Zn(2+): C394 and C397.

The protein belongs to the CRBN family. In terms of assembly, component of a DCX (DDB1-CUL4-X-box) protein ligase complex.

The protein localises to the cytoplasm. It is found in the nucleus. It participates in protein modification; protein ubiquitination. Functionally, substrate recognition component of a DCX (DDB1-CUL4-X-box) E3 protein ligase complex that mediates the ubiquitination and subsequent proteasomal degradation of target proteins, such as MEIS2. Normal degradation of key regulatory proteins is required for normal limb outgrowth and expression of the fibroblast growth factor FGF8. Maintains presynaptic glutamate release and consequently cognitive functions, such as memory and learning, by negatively regulating large-conductance calcium-activated potassium (BK) channels in excitatory neurons. Likely to function by regulating the assembly and neuronal surface expression of BK channels via its interaction with KCNT1. May also be involved in regulating anxiety-like behaviors via a BK channel-independent mechanism. This is Protein cereblon (crbn) from Xenopus tropicalis (Western clawed frog).